Here is a 209-residue protein sequence, read N- to C-terminus: Elongation factor Ts, chloroplastic (209 aa).

This sequence belongs to the EF-Ts family.

It localises to the plastid. The protein resides in the chloroplast. Its function is as follows. Associates with the EF-Tu.GDP complex and induces the exchange of GDP to GTP. It remains bound to the aminoacyl-tRNA.EF-Tu.GTP complex up to the GTP hydrolysis stage on the ribosome. The chain is Elongation factor Ts, chloroplastic (tsf) from Cyanidioschyzon merolae (strain NIES-3377 / 10D) (Unicellular red alga).